Consider the following 78-residue polypeptide: Short neurotoxin SNTX14 (78 aa).

An N-terminal signal peptide occupies residues 1–21 (MKTLLLTFLVVTIVCLDLGYT). 4 cysteine pairs are disulfide-bonded: Cys-24–Cys-40, Cys-33–Cys-58, Cys-62–Cys-70, and Cys-71–Cys-76.

Belongs to the three-finger toxin family. Short-chain subfamily. As to expression, expressed by the venom gland.

It localises to the secreted. This three-finger toxin binds and inhibits the nicotinic acetylcholine receptor (nAChR). This chain is Short neurotoxin SNTX14, found in Ophiophagus hannah (King cobra).